The following is a 128-amino-acid chain: uncharacterized protein (128 aa).

This is an uncharacterized protein from Mycoplasma pneumoniae (strain ATCC 29342 / M129 / Subtype 1) (Mycoplasmoides pneumoniae).